An 83-amino-acid chain; its full sequence is Cell division topological specificity factor (83 aa).

This sequence belongs to the MinE family.

Prevents the cell division inhibition by proteins MinC and MinD at internal division sites while permitting inhibition at polar sites. This ensures cell division at the proper site by restricting the formation of a division septum at the midpoint of the long axis of the cell. The sequence is that of Cell division topological specificity factor from Marinobacter nauticus (strain ATCC 700491 / DSM 11845 / VT8) (Marinobacter aquaeolei).